A 371-amino-acid chain; its full sequence is Glutamate 5-kinase (371 aa).

Lysine 14 contributes to the ATP binding site. Serine 54, aspartate 141, and asparagine 153 together coordinate substrate. 173–174 (TD) is a binding site for ATP. The 78-residue stretch at 280–357 (AGDLILDDGA…TQIEKLLGYI (78 aa)) folds into the PUA domain.

The protein belongs to the glutamate 5-kinase family.

It is found in the cytoplasm. It carries out the reaction L-glutamate + ATP = L-glutamyl 5-phosphate + ADP. The protein operates within amino-acid biosynthesis; L-proline biosynthesis; L-glutamate 5-semialdehyde from L-glutamate: step 1/2. Catalyzes the transfer of a phosphate group to glutamate to form L-glutamate 5-phosphate. The sequence is that of Glutamate 5-kinase from Aromatoleum aromaticum (strain DSM 19018 / LMG 30748 / EbN1) (Azoarcus sp. (strain EbN1)).